Here is a 375-residue protein sequence, read N- to C-terminus: Chaperone protein DnaJ (375 aa).

The J domain maps to 5–69 (DYYEVLGVSK…QKRAQYDQFG (65 aa)). A CR-type zinc finger spans residues 132–214 (GKETIIEIPR…CGGTGKVKKR (83 aa)). Zn(2+)-binding residues include cysteine 145, cysteine 148, cysteine 162, cysteine 165, cysteine 188, cysteine 191, cysteine 202, and cysteine 205. CXXCXGXG motif repeat units follow at residues 145-152 (CETCKGSG), 162-169 (CSHCGGSG), 188-195 (CHHCEGTG), and 202-209 (CSDCGGTG).

This sequence belongs to the DnaJ family. In terms of assembly, homodimer. Requires Zn(2+) as cofactor.

Its subcellular location is the cytoplasm. In terms of biological role, participates actively in the response to hyperosmotic and heat shock by preventing the aggregation of stress-denatured proteins and by disaggregating proteins, also in an autonomous, DnaK-independent fashion. Unfolded proteins bind initially to DnaJ; upon interaction with the DnaJ-bound protein, DnaK hydrolyzes its bound ATP, resulting in the formation of a stable complex. GrpE releases ADP from DnaK; ATP binding to DnaK triggers the release of the substrate protein, thus completing the reaction cycle. Several rounds of ATP-dependent interactions between DnaJ, DnaK and GrpE are required for fully efficient folding. Also involved, together with DnaK and GrpE, in the DNA replication of plasmids through activation of initiation proteins. The chain is Chaperone protein DnaJ from Bacillus velezensis (strain DSM 23117 / BGSC 10A6 / LMG 26770 / FZB42) (Bacillus amyloliquefaciens subsp. plantarum).